The primary structure comprises 573 residues: Phosphoenolpyruvate-protein phosphotransferase (573 aa).

The active-site Tele-phosphohistidine intermediate is H190. Phosphoenolpyruvate is bound by residues R297 and R332. The Mg(2+) site is built by E431 and D455. Phosphoenolpyruvate-binding positions include 454–455 and R465; that span reads ND. Catalysis depends on C502, which acts as the Proton donor.

It belongs to the PEP-utilizing enzyme family. Homodimer. Mg(2+) is required as a cofactor.

It localises to the cytoplasm. The enzyme catalyses L-histidyl-[protein] + phosphoenolpyruvate = N(pros)-phospho-L-histidyl-[protein] + pyruvate. Irreversibly inhibited the sulfhydryl reagent N-ethylmaleimide (NEM). Functionally, general (non sugar-specific) component of the phosphoenolpyruvate-dependent sugar phosphotransferase system (sugar PTS). This major carbohydrate active-transport system catalyzes the phosphorylation of incoming sugar substrates concomitantly with their translocation across the cell membrane. Enzyme I transfers the phosphoryl group from phosphoenolpyruvate (PEP) to the phosphoryl carrier protein (HPr). The polypeptide is Phosphoenolpyruvate-protein phosphotransferase (ptsI) (Mycoplasma capricolum subsp. capricolum (strain California kid / ATCC 27343 / NCTC 10154)).